The primary structure comprises 100 residues: Small ribosomal subunit protein uS14c (100 aa).

The protein belongs to the universal ribosomal protein uS14 family. In terms of assembly, part of the 30S ribosomal subunit.

It localises to the plastid. It is found in the chloroplast. Its function is as follows. Binds 16S rRNA, required for the assembly of 30S particles. This chain is Small ribosomal subunit protein uS14c, found in Angiopteris evecta (Mule's foot fern).